The primary structure comprises 166 residues: Regulatory protein RecX (166 aa).

Belongs to the RecX family.

The protein resides in the cytoplasm. Modulates RecA activity. This is Regulatory protein RecX from Salmonella agona (strain SL483).